Reading from the N-terminus, the 313-residue chain is MAHSHSHTSSHLPEDNNARRLLYAFGVTAGFMLVEVVGGFLSGSLALLADAGHMLTDTAALLFALLAVQFSRRPPTIRHTFGWLRLTTLAAFVNAIALVVITILIVWEAIERFRTPRPVEGGMMMAIAVAGLLANILSFWLLHHGSEEKNLNVRAAALHVLGDLLGSVGAIIAALIIIWTGWTPADPILSILVSLLVLRSAWRLLKDSVNELLEGAPVSLDIAELKRRMCREIPEVRNVHHVHVWMVGEKPVMTLHVQVIPPHDHDALLDQIQHYLMDHYQIEHATIQMEYQPCHGPDCHLNEGVSGHSHHHH.

Over 1–20 (MAHSHSHTSSHLPEDNNARR) the chain is Cytoplasmic. The chain crosses the membrane as a helical span at residues 21-41 (LLYAFGVTAGFMLVEVVGGFL). Residues 42-47 (SGSLAL) lie on the Periplasmic side of the membrane. Residues 48 to 68 (LADAGHMLTDTAALLFALLAV) traverse the membrane as a helical segment. Residues 69 to 89 (QFSRRPPTIRHTFGWLRLTTL) are Cytoplasmic-facing. Residues 90–110 (AAFVNAIALVVITILIVWEAI) traverse the membrane as a helical segment. Residues 111 to 121 (ERFRTPRPVEG) are Periplasmic-facing. The helical transmembrane segment at 122-142 (GMMMAIAVAGLLANILSFWLL) threads the bilayer. Residues 143–159 (HHGSEEKNLNVRAAALH) are Cytoplasmic-facing. The chain crosses the membrane as a helical span at residues 160–180 (VLGDLLGSVGAIIAALIIIWT). Residue G181 is a topological domain, periplasmic. A helical membrane pass occupies residues 182–202 (WTPADPILSILVSLLVLRSAW). Residues 203 to 313 (RLLKDSVNEL…GVSGHSHHHH (111 aa)) are Cytoplasmic-facing.

The protein belongs to the cation diffusion facilitator (CDF) transporter (TC 2.A.4) family. SLC30A subfamily.

It is found in the cell inner membrane. Involved in zinc efflux across the cytoplasmic membrane, thus reducing zinc accumulation in the cytoplasm and rendering bacteria more resistant to zinc. It may contribute to zinc homeostasis at low concentrations of zinc, whereas ZntA is required for growth at more toxic concentrations. This Escherichia coli (strain K12) protein is Zinc transporter ZitB (zitB).